Reading from the N-terminus, the 90-residue chain is Early nodulin-36A (90 aa).

In Glycine max (Soybean), this protein is Early nodulin-36A.